The sequence spans 396 residues: Ribosomal RNA large subunit methyltransferase I (396 aa).

Residues 2 to 79 form the PUA domain; the sequence is SVRLVLAKGR…QAESIDIAFF (78 aa).

The protein belongs to the methyltransferase superfamily. RlmI family.

The protein localises to the cytoplasm. The catalysed reaction is cytidine(1962) in 23S rRNA + S-adenosyl-L-methionine = 5-methylcytidine(1962) in 23S rRNA + S-adenosyl-L-homocysteine + H(+). Specifically methylates the cytosine at position 1962 (m5C1962) of 23S rRNA. This Citrobacter koseri (strain ATCC BAA-895 / CDC 4225-83 / SGSC4696) protein is Ribosomal RNA large subunit methyltransferase I.